A 1426-amino-acid polypeptide reads, in one-letter code: Epidermal growth factor receptor (1426 aa).

The N-terminal stretch at 1–30 (MLLRRRNGPCPFPLLLLLLAHCICIWPASA) is a signal peptide. Residues 31-868 (ARDRYARQNN…SKITANLDVN (838 aa)) are Extracellular-facing. Residues Asn128, Asn241, Asn419, Asn443, Asn482, Asn569, Asn599, Asn617, Asn816, Asn823, and Asn828 are each glycosylated (N-linked (GlcNAc...) asparagine). The chain crosses the membrane as a helical span at residues 869–889 (MIFIITGAVLVPTICILCVVT). Residues 890 to 1426 (YICRQKQKAK…HRNRNTETRV (537 aa)) are Cytoplasmic-facing. Thr902 bears the Phosphothreonine; by PKC mark. The Protein kinase domain maps to 938 to 1198 (LRKGGVLGMG…QLTTVFAEFA (261 aa)). ATP contacts are provided by residues 944–952 (LGMGAFGRV) and Lys971. Catalysis depends on Asp1063, which acts as the Proton acceptor. The disordered stretch occupies residues 1232–1297 (PTTDGSEAIA…DSSAREVGVG (66 aa)). The segment covering 1257–1276 (HRTDCTDEMPKLNRYCKDPS) has biased composition (basic and acidic residues). A Phosphotyrosine; by autocatalysis modification is found at Tyr1310.

This sequence belongs to the protein kinase superfamily. Tyr protein kinase family. EGF receptor subfamily. As to quaternary structure, homodimer. Binding of the ligand spitz triggers homodimerization of the receptor however, it is able to form dimers, albeit weakly, in the absence of spitz. Interacts (when phosphorylated on tyrosine residues) with Vav (via SH2 domain). Interacts (when ubiquitinated) with Graf. May interact (when phosphorylated) with EGFRAP (via SH2 domain). In terms of processing, ubiquitination by Cbl in response to high spi, promotes its interaction with Graf and thus facilitates its GPI-enriched endocytic compartment (GEEC) mediated endocytosis and its subsequent degradation. Ubiquitously expressed in embryos. In larvae, uniform expression is seen in wing disks, genital disk, anlagen of testis and ovary, and brain cortex. In eye-antenna disk, highest expression is anterior to morphogenetic furrow, levels remain high in photoreceptor precursor cells. This pattern is reversed in posterior eye disk. In adults expression is high in brain cortex and thoracic and abdominal ganglia.

The protein resides in the membrane. It carries out the reaction L-tyrosyl-[protein] + ATP = O-phospho-L-tyrosyl-[protein] + ADP + H(+). In terms of biological role, receptor tyrosine kinase, binding ligands of the EGF family and activating several signaling cascades to convert extracellular cues into appropriate cellular responses. Known ligands include spitz, gurken, vein and giant-lens. Transduces the signal through the ras-raf-MAPK pathway. Critical for the proliferation of imaginal tissues, and for the determination of both the antero-posterior and dorso-ventral polarities of the oocyte. In the embryo, plays a role in the establishment of ventral cell fates, maintenance of amnioserosa and ventral neuroectodermal cells, germ band retraction, cell fate specification in the central nervous system, and production and repair of the cuticle. During dorsal closure (DC) functions with the dpp- and ACK-signaling pathways to regulate expression of the myosin zip in the embryonic epidermis and amnioserosa (AS), and thus coordinate the progression of epidermal cell shape changes required for correct DC. In the embryonic epidermis, functions by negatively regulating dpp and consequently the dpp-dependent expression of the myosin zip. In the AS, negatively regulates the production/ and or secretion of a diffusible signal which, is produced by the ACK-signaling pathway, and acts in the AS and epidermal cells to promote zip expression. Also required in the AS to inhibit or delay apoptosis, and consequently slow the rate of DC. Therefore functions at multiple levels to negatively regulate morphogenesis during DC, suggesting that it acts as a general brake mechanism for adjusting the rate of dorsal closure to ensure that closure proceeds smoothly and without loss of epidermal integrity. During oogenesis, one of two tyrosine kinase chemoattractant receptors (Egfr and Pvr), that function in the border cells (BC) to detect guidance cues from the oocyte and transduce this information to the guidance pathway that regulate the collective migration of the BC cluster through the nurse cells to the oocyte. The sequence is that of Epidermal growth factor receptor (Egfr) from Drosophila melanogaster (Fruit fly).